The following is a 356-amino-acid chain: S-adenosylmethionine:tRNA ribosyltransferase-isomerase (356 aa).

The protein belongs to the QueA family. As to quaternary structure, monomer.

The protein resides in the cytoplasm. It catalyses the reaction 7-aminomethyl-7-carbaguanosine(34) in tRNA + S-adenosyl-L-methionine = epoxyqueuosine(34) in tRNA + adenine + L-methionine + 2 H(+). It functions in the pathway tRNA modification; tRNA-queuosine biosynthesis. Transfers and isomerizes the ribose moiety from AdoMet to the 7-aminomethyl group of 7-deazaguanine (preQ1-tRNA) to give epoxyqueuosine (oQ-tRNA). This is S-adenosylmethionine:tRNA ribosyltransferase-isomerase from Escherichia fergusonii (strain ATCC 35469 / DSM 13698 / CCUG 18766 / IAM 14443 / JCM 21226 / LMG 7866 / NBRC 102419 / NCTC 12128 / CDC 0568-73).